The primary structure comprises 315 residues: Secreted mono- and diacylglycerol lipase LIP2 (315 aa).

A signal peptide spans 1-21; that stretch reads MACFRVILYLSVIFFVQCVFA. Residues cysteine 68 and cysteine 308 are joined by a disulfide bond. An N-linked (GlcNAc...) asparagine glycan is attached at asparagine 74. Serine 182 functions as the Nucleophile in the catalytic mechanism. The active site involves aspartate 240. An N-linked (GlcNAc...) asparagine glycan is attached at asparagine 265. The active site involves histidine 292.

This sequence belongs to the AB hydrolase superfamily. Lipase family. Class 3 subfamily.

The protein localises to the secreted. The enzyme catalyses a monoacylglycerol + H2O = glycerol + a fatty acid + H(+). It catalyses the reaction a diacylglycerol + H2O = a monoacylglycerol + a fatty acid + H(+). Functionally, secreted lipase involved in Dandruff and seborrheic dermatitis (D/SD) probably via lipase-mediated breakdown of sebaceous lipids and release of irritating free fatty acids. Shows activity against monoglyceride and diglyceride substrates and generates free oleic acid from the substrates mono- and diolein. Able to cleave the oleic acid from both the 1 and the 2 position of the glycerol backbone as 1,2 isomers of diolein were converted into oleic acid and glycerol. Due to an absence of fatty acid synthase genes in Malassezia species, secretory lipases are essential for the yeast to generate free fatty acids from degradation of sebum and assimilate them as lipid sources for growth. Plays an essential role at the pathogen-host interface during disease progression. Also performs the reverse reaction to build diacylglycerols from monoacylglycerols. This Malassezia restricta (strain ATCC 96810 / NBRC 103918 / CBS 7877) (Seborrheic dermatitis infection agent) protein is Secreted mono- and diacylglycerol lipase LIP2.